A 319-amino-acid chain; its full sequence is Acetyl-coenzyme A carboxylase carboxyl transferase subunit alpha (319 aa).

The CoA carboxyltransferase C-terminal domain occupies 38–293; that stretch reads HALQDKLRMR…KAVLLNELDA (256 aa).

This sequence belongs to the AccA family. In terms of assembly, acetyl-CoA carboxylase is a heterohexamer composed of biotin carboxyl carrier protein (AccB), biotin carboxylase (AccC) and two subunits each of ACCase subunit alpha (AccA) and ACCase subunit beta (AccD).

It is found in the cytoplasm. The catalysed reaction is N(6)-carboxybiotinyl-L-lysyl-[protein] + acetyl-CoA = N(6)-biotinyl-L-lysyl-[protein] + malonyl-CoA. Its pathway is lipid metabolism; malonyl-CoA biosynthesis; malonyl-CoA from acetyl-CoA: step 1/1. In terms of biological role, component of the acetyl coenzyme A carboxylase (ACC) complex. First, biotin carboxylase catalyzes the carboxylation of biotin on its carrier protein (BCCP) and then the CO(2) group is transferred by the carboxyltransferase to acetyl-CoA to form malonyl-CoA. In Stenotrophomonas maltophilia (strain K279a), this protein is Acetyl-coenzyme A carboxylase carboxyl transferase subunit alpha.